The sequence spans 282 residues: MISNFNLSYSLKHVSSCFIFSDNNDPINKLINSLNSNLNLKVRLPSDYNLLADEFLPPNQSVLIDFKDIDDNWFSKAKHLPSLFSNRRSPYFPTLAQKHILESLKTVPVYTIVNDLNEIVIASPRDLTNFNSFNWVKRFYNDWFIWEKDEGNVNIGLFFMNREDAELYLHQICLKDPRGVENVGVNVKTISLDTFYKLNRLSPPRLQFKLIADLQEIKNILNVNSNSRVSFHPKQKYDKNWFKGIPIFIYSPTVTNLDWTLKSNKNMIFFQEMMHIMFQKIY.

Belongs to the ycf80 family.

Its subcellular location is the plastid. The protein localises to the chloroplast. This is an uncharacterized protein from Guillardia theta (Cryptophyte).